The sequence spans 583 residues: Kelch-like protein 35 (583 aa).

The region spanning T41–A119 is the BTB domain. One can recognise a BACK domain in the interval L146 to A248. Kelch repeat units lie at residues V301 to N350, V352 to G394, Q395 to G441, L443 to D489, T490 to G531, and V533 to Q579.

The polypeptide is Kelch-like protein 35 (KLHL35) (Homo sapiens (Human)).